A 987-amino-acid chain; its full sequence is MSAQSLLHSVFSCSSPASGGTASAKGFSKRKLRQTRSLDPALIGGCGSEMGAEGGLRGSTVSRLHSPQLLAEGLGSRLASSPRSQHLRATRFQTPRPLCSSFSTPSTPQEKSPSGSFHFDYEVPLSRSGLKKSMAWDLPSVLAGSGSASSRSPASILSSSGGGPNGIFSSPRRWLQQRKFQPPPNSRSHPYVVWRSEGDFTWNSMSGRSVRLRSVPIQSLSELERARLQEVAFYQLQQDCDLGCQITIPKDGQKRKKSLRKKLDSLGKEKNKDKEFIPQAFGMPLSQVIANDRAYKLKQDLQREEQKDASSDFVSSLLPFGNKKQNKELSSSNSSLSSTSETPNESTSPNTPEPAPRARRRGAMSVDSITDLDDNQSRLLEALQLSLPAEAQSKKEKARDKKLSLNPIYRQVPRLVDSCCQHLEKHGLQTVGIFRVGSSKKRVRQLREEFDRGVDVCLEEEHSVHDVAALLKEFLRDMPDPLLTRELYTAFINTLLLEPEEQLGTLQLLIYLLPPCNCDTLHRLLQFLSIVARHADDNVSKDGQEVTGNKMTSLNLATIFGPNLLHKQKSSDKEYSVQSSARAEESTAIIAVVQKMIENYEALFMVPPDLQNEVLISLLETDPDVVDYLLRRKASQSSSPDILQTEVSFSMGGRHSSTDSNKASSGDISPYDNNSPVLSERSLLAMQEDRARGGSEKLYKVPEQYTLVGHLSSPKSKSRESSPGPRLGKEMSEEPFNIWGTWHSTLKSGSKDPGMTGSYGDIFESSSLRPRPCSLSQGNLSLNWPRCQGSPTGLDSGTQVIRRTQTAATVEQCSVHLPVSRVCSTPHIQDGSRGTRRPAASSDPFLSLNSTEDLAEGKEDVAWLQSQARPVYQRPQESGKDDRRPPPPYPGSGKPATTSAQLPLEPPLWRLQRHEEGSETAVEGGQQASGEHQTRPKKLSSAYSLSASEQDKQNLGEASWLDWQRERWQIWELLSTDNPDALPETLV.

Positions 1 to 21 (MSAQSLLHSVFSCSSPASGGT) are enriched in polar residues. Disordered stretches follow at residues 1 to 60 (MSAQ…RGST), 76 to 117 (SRLA…SGSF), and 144 to 170 (GSGS…IFSS). Position 37 is a phosphoserine (serine 37). Positions 44–57 (GGCGSEMGAEGGLR) are enriched in gly residues. The segment covering 100 to 115 (SSFSTPSTPQEKSPSG) has biased composition (polar residues). The segment covering 144-159 (GSGSASSRSPASILSS) has biased composition (low complexity). Residue serine 265 is modified to Phosphoserine. Residues 324 to 363 (KQNKELSSSNSSLSSTSETPNESTSPNTPEPAPRARRRGA) form a disordered region. Positions 328–350 (ELSSSNSSLSSTSETPNESTSPN) are enriched in low complexity. Residues 344–354 (NESTSPNTPEP) carry the SH3-binding motif. Serine 365 carries the phosphoserine modification. The Rho-GAP domain maps to 403-604 (LSLNPIYRQV…KMIENYEALF (202 aa)). The tract at residues 641–676 (DILQTEVSFSMGGRHSSTDSNKASSGDISPYDNNSP) is disordered. Residues 658-676 (TDSNKASSGDISPYDNNSP) show a composition bias toward polar residues. Residues serine 669, serine 675, serine 682, serine 713, serine 758, serine 776, serine 781, serine 790, and serine 824 each carry the phosphoserine modification. The tract at residues 709–731 (GHLSSPKSKSRESSPGPRLGKEM) is disordered. Disordered stretches follow at residues 825–847 (TPHI…PFLS) and 863–953 (WLQS…QDKQ). Residues 939 to 948 (LSSAYSLSAS) show a composition bias toward low complexity. Residues serine 941 and serine 944 each carry the phosphoserine modification.

In terms of tissue distribution, expressed in retina and lung.

It is found in the cytoplasm. GTPase activator for the Rho-type GTPases by converting them to an inactive GDP-bound state. Could regulate the interactions of signaling molecules with the actin cytoskeleton. Promotes continuous elongation of cytoplasmic processes during cell motility and simultaneous retraction of the cell body changing the cell morphology. The sequence is that of Rho GTPase-activating protein 6 (Arhgap6) from Mus musculus (Mouse).